A 98-amino-acid chain; its full sequence is Aspartyl/glutamyl-tRNA(Asn/Gln) amidotransferase subunit C (98 aa).

The segment at 75 to 98 (EQALSGAPDSDDNRFKVPAILDEA) is disordered.

It belongs to the GatC family. Heterotrimer of A, B and C subunits.

It carries out the reaction L-glutamyl-tRNA(Gln) + L-glutamine + ATP + H2O = L-glutaminyl-tRNA(Gln) + L-glutamate + ADP + phosphate + H(+). The catalysed reaction is L-aspartyl-tRNA(Asn) + L-glutamine + ATP + H2O = L-asparaginyl-tRNA(Asn) + L-glutamate + ADP + phosphate + 2 H(+). Its function is as follows. Allows the formation of correctly charged Asn-tRNA(Asn) or Gln-tRNA(Gln) through the transamidation of misacylated Asp-tRNA(Asn) or Glu-tRNA(Gln) in organisms which lack either or both of asparaginyl-tRNA or glutaminyl-tRNA synthetases. The reaction takes place in the presence of glutamine and ATP through an activated phospho-Asp-tRNA(Asn) or phospho-Glu-tRNA(Gln). The sequence is that of Aspartyl/glutamyl-tRNA(Asn/Gln) amidotransferase subunit C from Pseudarthrobacter chlorophenolicus (strain ATCC 700700 / DSM 12829 / CIP 107037 / JCM 12360 / KCTC 9906 / NCIMB 13794 / A6) (Arthrobacter chlorophenolicus).